The following is a 117-amino-acid chain: Resistin-like gamma (117 aa).

A signal peptide spans 1–29 (MLTFNKMKTTTCSLLICISLLQLMVPVNT). Intrachain disulfides connect C61-C114, C73-C113, C82-C99, C84-C101, and C88-C103.

It belongs to the resistin/FIZZ family. Homodimer. Heterodimer with RETNLB. In terms of tissue distribution, expressed in colon, lung, spleen, pancreas, ileum and bone marrow (at protein level). In colon, found throughout the crypt and surface epithelium, including goblet cells (at protein level). Highest expression is observed in bone marrow, spleen and lung, with lower levels in other tissues. Detected at low levels in granulocytes, but not found in monocytes or lymphocytes. Has very weak expression in white adipose tissue.

The protein localises to the secreted. Probable hormone. Promotes chemotaxis in myeloid cells. This chain is Resistin-like gamma, found in Mus musculus (Mouse).